We begin with the raw amino-acid sequence, 525 residues long: Lysine--tRNA ligase (525 aa).

Mg(2+)-binding residues include Glu-419 and Glu-426.

It belongs to the class-II aminoacyl-tRNA synthetase family. Homodimer. Mg(2+) is required as a cofactor.

The protein resides in the cytoplasm. It carries out the reaction tRNA(Lys) + L-lysine + ATP = L-lysyl-tRNA(Lys) + AMP + diphosphate. The polypeptide is Lysine--tRNA ligase (lysS) (Deinococcus radiodurans (strain ATCC 13939 / DSM 20539 / JCM 16871 / CCUG 27074 / LMG 4051 / NBRC 15346 / NCIMB 9279 / VKM B-1422 / R1)).